We begin with the raw amino-acid sequence, 175 residues long: Transcription factor E (175 aa).

Residues 3–88 (ENPLIQQVLF…TWKPSLEKVP (86 aa)) form the HTH TFE/IIEalpha-type domain.

This sequence belongs to the TFE family. Monomer. Interaction with RNA polymerase subunits RpoF and RpoE is necessary for Tfe stimulatory transcription activity. Able to interact with Tbp and RNA polymerase in the absence of DNA promoter. Interacts both with the preinitiation and elongation complexes.

In terms of biological role, transcription factor that plays a role in the activation of archaeal genes transcribed by RNA polymerase. Facilitates transcription initiation by enhancing TATA-box recognition by TATA-box-binding protein (Tbp), and transcription factor B (Tfb) and RNA polymerase recruitment. Not absolutely required for transcription in vitro, but particularly important in cases where Tbp or Tfb function is not optimal. It dynamically alters the nucleic acid-binding properties of RNA polymerases by stabilizing the initiation complex and destabilizing elongation complexes. Seems to translocate with the RNA polymerase following initiation and acts by binding to the non template strand of the transcription bubble in elongation complexes. The polypeptide is Transcription factor E (Methanococcus maripaludis (strain DSM 14266 / JCM 13030 / NBRC 101832 / S2 / LL)).